Consider the following 122-residue polypeptide: UPF0102 protein BARBAKC583_1042 (122 aa).

Belongs to the UPF0102 family.

The sequence is that of UPF0102 protein BARBAKC583_1042 from Bartonella bacilliformis (strain ATCC 35685 / KC583 / Herrer 020/F12,63).